The chain runs to 134 residues: Z-ring associated protein G (134 aa).

Residues 7 to 27 traverse the membrane as a helical segment; it reads EIWVAIGIAFIVGLFIGYIIV. Positions 107–134 are disordered; it reads ATDKSQNEQPRDYSEGASGLFKENKEEN. Residues 111 to 120 are compositionally biased toward basic and acidic residues; that stretch reads SQNEQPRDYS.

It belongs to the ZapG family.

Its subcellular location is the cell inner membrane. In terms of biological role, involved in cell division, cell envelope biogenesis and cell shape maintenance. The sequence is that of Z-ring associated protein G from Haemophilus influenzae (strain ATCC 51907 / DSM 11121 / KW20 / Rd).